A 542-amino-acid chain; its full sequence is MAKEIIFREDARRALERGVNALAEAVKVTLGPKGRNVVIEKKFGAPTITNDGVTIAREIELEDNFENMGAQLVKEVATKTNDVAGDGTTTATVLAQALVREGLKNVAAGANPMIIKRGIEKAVEKAVEEIKAMAKPIESKEAIAQVATVSANDDSIGNLIAEAMEKVGKDGVITVEESQGIGTNLEVVEGMNFDRGYISPYMITDTDKMEAALTDPYILITDKKVSSVQELLPVLEKVVQTGNKPVLLICEDLEGEALATLVLNKLRGTLNVVAVKAPGFGDRRKAMLEDIAILTGGTVITEEVGLKLDKAELDMLGTARQIRVKKEETIIVGGAGEQAQIEGRIAQIKKQIEETTSDFDREKLQERLAKLAGGVAVIQVGAATEVEMKEKKLRIDDALNATRAAVEEGIVPGGGSAFVNIITTLDSVQLEGDAKTGVDIVKRALEEPLRQIANNAGLEGSVVVEKVRTTGKGFNAMSEEYVDMIAAGIIDPAKVTRSALQNAASIAAMVLTTETLVADKPEKDAPNPMAGMGGMGGMGGMM.

ATP is bound by residues Thr-29–Pro-32, Asp-86–Thr-90, Gly-414, and Asp-491.

Belongs to the chaperonin (HSP60) family. In terms of assembly, forms a cylinder of 14 subunits composed of two heptameric rings stacked back-to-back. Interacts with the co-chaperonin GroES.

The protein resides in the cytoplasm. The catalysed reaction is ATP + H2O + a folded polypeptide = ADP + phosphate + an unfolded polypeptide.. Together with its co-chaperonin GroES, plays an essential role in assisting protein folding. The GroEL-GroES system forms a nano-cage that allows encapsulation of the non-native substrate proteins and provides a physical environment optimized to promote and accelerate protein folding. The chain is Chaperonin GroEL from Desulforamulus reducens (strain ATCC BAA-1160 / DSM 100696 / MI-1) (Desulfotomaculum reducens).